Here is a 296-residue protein sequence, read N- to C-terminus: Cytidine deaminase (296 aa).

CMP/dCMP-type deaminase domains follow at residues 47–167 and 186–296; these read TEAE…FGPK and DSAD…IDPV. 88–90 lines the substrate pocket; the sequence is NLE. His-101 provides a ligand contact to Zn(2+). Glu-103 functions as the Proton donor in the catalytic mechanism. Residues Cys-128 and Cys-131 each coordinate Zn(2+).

This sequence belongs to the cytidine and deoxycytidylate deaminase family. In terms of assembly, homodimer. The cofactor is Zn(2+).

The catalysed reaction is cytidine + H2O + H(+) = uridine + NH4(+). It catalyses the reaction 2'-deoxycytidine + H2O + H(+) = 2'-deoxyuridine + NH4(+). This enzyme scavenges exogenous and endogenous cytidine and 2'-deoxycytidine for UMP synthesis. In Shewanella baltica (strain OS155 / ATCC BAA-1091), this protein is Cytidine deaminase.